The chain runs to 59 residues: Single-pass membrane and coiled-coil domain-containing protein 4 (59 aa).

A disordered region spans residues 1–23 (MRQLKGKPKKETSKDKRERKQAM). A compositionally biased stretch (basic and acidic residues) spans 9-23 (KKETSKDKRERKQAM). The stretch at 9 to 30 (KKETSKDKRERKQAMQDARKQV) forms a coiled coil. A helical transmembrane segment spans residues 32-52 (TVVLPTVAVVVLLIVFFVYAA).

The protein belongs to the SMCO4 family.

It is found in the membrane. In Takifugu rubripes (Japanese pufferfish), this protein is Single-pass membrane and coiled-coil domain-containing protein 4 (smco4).